A 357-amino-acid polypeptide reads, in one-letter code: Alkanal monooxygenase alpha chain (357 aa).

This sequence belongs to the bacterial luciferase oxidoreductase family. In terms of assembly, heterodimer of an alpha and a beta chain.

The enzyme catalyses a long-chain fatty aldehyde + FMNH2 + O2 = a long-chain fatty acid + hnu + FMN + H2O + 2 H(+). In terms of biological role, light-emitting reaction in luminous bacteria. The sequence is that of Alkanal monooxygenase alpha chain (luxA) from Kryptophanaron alfredi symbiont.